We begin with the raw amino-acid sequence, 2322 residues long: Protein sidekick homolog (2322 aa).

Residues methionine 1–glycine 26 form the signal peptide. Topologically, residues lysine 27–tryptophan 2020 are extracellular. Ig-like C2-type domains follow at residues proline 28–serine 105, proline 217–threonine 319, and proline 324–serine 397. 3 cysteine pairs are disulfide-bonded: cysteine 52–cysteine 94, cysteine 247–cysteine 301, and cysteine 345–cysteine 386. An N-linked (GlcNAc...) asparagine glycan is attached at asparagine 408. 2 consecutive Ig-like C2-type domains span residues proline 450–asparagine 545 and serine 548–glutamine 639. 2 disulfides stabilise this stretch: cysteine 481/cysteine 529 and cysteine 569/cysteine 623. Residues asparagine 633 and asparagine 656 are each glycosylated (N-linked (GlcNAc...) asparagine). 13 Fibronectin type-III domains span residues methionine 646–glutamine 752, alanine 757–glycine 854, alanine 859–aspartate 958, alanine 962–glutamate 1056, arginine 1060–threonine 1155, proline 1160–serine 1255, serine 1260–aspartate 1360, proline 1364–arginine 1458, alanine 1464–serine 1567, glutamine 1572–serine 1672, proline 1674–lysine 1774, proline 1777–glycine 1873, and glutamine 1908–serine 2010. Positions serine 732 to alanine 762 are disordered. N-linked (GlcNAc...) asparagine glycans are attached at residues asparagine 808, asparagine 869, asparagine 933, and asparagine 1017. Residues glycine 1040–phenylalanine 1049 are compositionally biased toward basic and acidic residues. Positions glycine 1040–arginine 1060 are disordered. Asparagine 1108 carries an N-linked (GlcNAc...) asparagine glycan. Positions glycine 1139–arginine 1163 are disordered. The span at proline 1146–arginine 1163 shows a compositional bias: polar residues. N-linked (GlcNAc...) asparagine glycans are attached at residues asparagine 1615, asparagine 1677, and asparagine 1864. Positions glutamate 1916–glycine 1965 are disordered. A compositionally biased stretch (low complexity) spans alanine 1935–serine 1947. The chain crosses the membrane as a helical span at residues tryptophan 2021 to leucine 2041. Residues cysteine 2042–valine 2322 lie on the Cytoplasmic side of the membrane. Disordered stretches follow at residues asparagine 2081 to glycine 2114, tyrosine 2167 to isoleucine 2254, and methionine 2276 to valine 2322. Over residues proline 2092–aspartate 2101 the composition is skewed to polar residues. Positions proline 2207 to glutamine 2223 are enriched in low complexity. The span at aspartate 2227–aspartate 2238 shows a compositional bias: acidic residues. 2 stretches are compositionally biased toward polar residues: residues leucine 2282–glutamate 2302 and alanine 2310–valine 2322.

It belongs to the sidekick family.

The protein localises to the membrane. Cell adhesion protein. The chain is Protein sidekick homolog (rig-4) from Caenorhabditis briggsae.